The sequence spans 671 residues: UvrABC system protein B (671 aa).

The Helicase ATP-binding domain maps to 31–414 (DGFEQGEKAQ…ELNQTDHKVE (384 aa)). 44-51 (GATGTGKT) provides a ligand contact to ATP. The short motif at 97 to 120 (YYDYYQPEAYVPQSDTYIEKDSSI) is the Beta-hairpin element. The Helicase C-terminal domain maps to 435–601 (QIDDLVGEVN…TIVKPIRDVI (167 aa)). Positions 630–665 (QNMIKTLTAQMQEAAKKLDFEEAANLRDAIMDLKKQ) constitute a UVR domain.

Belongs to the UvrB family. In terms of assembly, forms a heterotetramer with UvrA during the search for lesions. Interacts with UvrC in an incision complex.

Its subcellular location is the cytoplasm. In terms of biological role, the UvrABC repair system catalyzes the recognition and processing of DNA lesions. A damage recognition complex composed of 2 UvrA and 2 UvrB subunits scans DNA for abnormalities. Upon binding of the UvrA(2)B(2) complex to a putative damaged site, the DNA wraps around one UvrB monomer. DNA wrap is dependent on ATP binding by UvrB and probably causes local melting of the DNA helix, facilitating insertion of UvrB beta-hairpin between the DNA strands. Then UvrB probes one DNA strand for the presence of a lesion. If a lesion is found the UvrA subunits dissociate and the UvrB-DNA preincision complex is formed. This complex is subsequently bound by UvrC and the second UvrB is released. If no lesion is found, the DNA wraps around the other UvrB subunit that will check the other stand for damage. This is UvrABC system protein B from Lactobacillus johnsonii (strain CNCM I-12250 / La1 / NCC 533).